The primary structure comprises 1024 residues: PH and SEC7 domain-containing protein 1 (1024 aa).

The segment at 67 to 96 (CTPLRAPPSPHIAPSPWGPSSPTGQPPPGA) is disordered. A compositionally biased stretch (pro residues) spans 71–95 (RAPPSPHIAPSPWGPSSPTGQPPPG). Serine 126 and serine 156 each carry phosphoserine. Disordered stretches follow at residues 154–195 (STSD…LPNG), 250–277 (PSSG…VAVG), 307–401 (REEA…GPDS), and 434–536 (PTQS…LDST). Acidic residues predominate over residues 348-365 (NEDDEAGGEEDVDDEVFE). Positions 445 to 463 (PPQPPAPRPDPPAPAPLAP) are enriched in pro residues. Residues 495 to 507 (PRKELPSPSHSED) are compositionally biased toward basic and acidic residues. The SEC7 domain maps to 512 to 706 (GAAPLGSEPP…KALYSSIKNE (195 aa)). Serine 720 bears the Phosphoserine mark. One can recognise a PH domain in the interval 756–869 (AVYKHGALVR…WITRINVVAA (114 aa)). 2 coiled-coil regions span residues 898 to 924 (LSQE…HRAA) and 956 to 983 (AALL…AGST). The tract at residues 976–1024 (ALAQAGSTEDGCPPPHSSPSLRPKPTSQPRAQRPGSETRAGAGSTRPKP) is disordered.

Belongs to the PSD family. As to quaternary structure, interacts with ACTN1. Interacts (ARF6-bound form) with KCNK1; does not interact with KCNK1 in the absence of ARF6. As to expression, highest expression detected in brain and some expression detected also in uterus, stomach, ovary and intestine, with isoform 2 being expressed at the highest levels. In the brain, isoform 1 is highly expressed in the strata oriens, radiatum, lacunosum-moleculare of the hippocampal CA1-3 regions and the dentate molecular layer of the hippocampal formation, with lower levels detected in the neuronal cell layers and the stratum lucidum (at protein level). Not detected in tongue, thymus, spleen, lung, heart, liver and kidney.

It localises to the cell membrane. The protein resides in the cell projection. Its subcellular location is the ruffle. The protein localises to the ruffle membrane. It is found in the cleavage furrow. Guanine nucleotide exchange factor for ARF6. Isoform 2 and isoform 3 induce cytoskeletal remodeling, but lead to distinct morphological changes in HeLa cells: isoform 2 induces cell elongation and formation of actin-rich protrusions, whereas isoform 3 promotes the formation of membrane ruffles and loss of stress fibers. The chain is PH and SEC7 domain-containing protein 1 (Psd) from Mus musculus (Mouse).